We begin with the raw amino-acid sequence, 235 residues long: 7-cyano-7-deazaguanine synthase (235 aa).

Position 8–18 (8–18 (FSGGQDSTTCL)) interacts with ATP. Cys-187, Cys-196, Cys-199, and Cys-202 together coordinate Zn(2+).

It belongs to the QueC family. Requires Zn(2+) as cofactor.

It catalyses the reaction 7-carboxy-7-deazaguanine + NH4(+) + ATP = 7-cyano-7-deazaguanine + ADP + phosphate + H2O + H(+). It participates in purine metabolism; 7-cyano-7-deazaguanine biosynthesis. In terms of biological role, catalyzes the ATP-dependent conversion of 7-carboxy-7-deazaguanine (CDG) to 7-cyano-7-deazaguanine (preQ(0)). This is 7-cyano-7-deazaguanine synthase from Aeromonas hydrophila subsp. hydrophila (strain ATCC 7966 / DSM 30187 / BCRC 13018 / CCUG 14551 / JCM 1027 / KCTC 2358 / NCIMB 9240 / NCTC 8049).